The chain runs to 159 residues: Large ribosomal subunit protein uL15 (159 aa).

Over residues 1–13 (MRIHEVTPKEGST) the composition is skewed to basic and acidic residues. Positions 1 to 51 (MRIHEVTPKEGSTKRRRRVGRGISAGQGASCGFGMRGQKSRSGTGTKAGFE) are disordered. A compositionally biased stretch (gly residues) spans 23–35 (ISAGQGASCGFGM).

This sequence belongs to the universal ribosomal protein uL15 family. As to quaternary structure, part of the 50S ribosomal subunit.

Its function is as follows. Binds to the 23S rRNA. The sequence is that of Large ribosomal subunit protein uL15 from Rippkaea orientalis (strain PCC 8801 / RF-1) (Cyanothece sp. (strain PCC 8801)).